The following is a 394-amino-acid chain: Mucosal addressin cell adhesion molecule 1 (394 aa).

Positions 1–19 (MEPILALLLALGPFQLSRG) are cleaved as a signal peptide. Ig-like domains lie at 20–107 (QSFQ…ILVY), 108–225 (AFPD…TSPE), and 256–345 (PSTP…YVTG). Residues 20–353 (QSFQVNPPEP…TGQVIPNPSS (334 aa)) are Extracellular-facing. N-linked (GlcNAc...) asparagine glycosylation occurs at N42. 3 disulfide bridges follow: C43/C89, C47/C93, and C130/C198. The segment at 219-255 (QSQTSPEPPSTTSAKPYILTSSHTTKAVSTGLSSVAL) is mucin-like. Residues C282 and C330 are joined by a disulfide bond. The helical transmembrane segment at 354–374 (MVALWIGSLVLGLLALAFLAY) threads the bilayer. The Cytoplasmic segment spans residues 375–394 (CLWKRYRPGPLPDSSSCTLL).

Homodimer. As to expression, detected in Peyer patches and mesenteric lymph nodes but not in spleen.

It is found in the membrane. Functionally, cell adhesion leukocyte receptor expressed by mucosal venules, helps to direct lymphocyte traffic into mucosal tissues including the Peyer patches and the intestinal lamina propria. It can bind both the integrin alpha-4/beta-7 and L-selectin, regulating both the passage and retention of leukocytes. This is Mucosal addressin cell adhesion molecule 1 (Madcam1) from Rattus norvegicus (Rat).